A 296-amino-acid chain; its full sequence is Probable endonuclease 4 (296 aa).

Residues His68, His108, Glu145, Asp179, His182, His216, Asp229, His231, and Glu261 each contribute to the Zn(2+) site.

This sequence belongs to the AP endonuclease 2 family. Zn(2+) is required as a cofactor.

The enzyme catalyses Endonucleolytic cleavage to 5'-phosphooligonucleotide end-products.. Its function is as follows. Endonuclease IV plays a role in DNA repair. It cleaves phosphodiester bonds at apurinic or apyrimidinic (AP) sites, generating a 3'-hydroxyl group and a 5'-terminal sugar phosphate. The protein is Probable endonuclease 4 of Geobacter sulfurreducens (strain ATCC 51573 / DSM 12127 / PCA).